The sequence spans 71 residues: Ranatuerin-2Va (71 aa).

A signal peptide spans Met1–Cys22. Positions Glu23–Arg43 are excised as a propeptide. An intrachain disulfide couples Cys66 to Cys71.

Expressed by the skin glands.

It localises to the secreted. Functionally, antimicrobial peptide. This chain is Ranatuerin-2Va, found in Odorrana versabilis (Chinese bamboo leaf odorous frog).